Consider the following 3096-residue polypeptide: Unconventional myosin-XVB (3096 aa).

4 disordered regions span residues 1-330, 389-489, 508-540, and 553-649; these read MGRN…GPED, RPPE…GWGR, GGMP…ETPD, and AGRA…GPRL. Low complexity predominate over residues 19–33; sequence ASGEQESGSASADGA. Residues 34–50 are compositionally biased toward basic and acidic residues; it reads PSRERRSDRGQADRAKP. Positions 124 to 143 are enriched in basic residues; sequence RRRRKRKDKGPSARRGRRTP. Composition is skewed to basic and acidic residues over residues 212-222 and 261-288; these read DWPHADTRGRE and TFED…RGAE. A compositionally biased stretch (low complexity) spans 307–330; sequence AVGQVPAAAGEGEAGAAAGAGPED. The span at 406–416 shows a compositional bias: basic and acidic residues; the sequence is WGRRKPDEGRG. Over residues 417–426 the composition is skewed to basic residues; that stretch reads HGRGSKGRGR. Over residues 427–489 the composition is skewed to basic and acidic residues; sequence GKADEGRGHE…HQRGYEGWGR (63 aa). Residues 720 to 1394 form the Myosin motor domain; sequence EDMEDLARLR…GWQRLEELRD (675 aa). ATP is bound at residue 818–825; it reads GHSGSGKT. The tract at residues 1273–1295 is actin-binding; the sequence is LEDLIARLGRSHVYFIQCLTPNP. One can recognise an IQ domain in the interval 1414–1443; sequence RQRVLPRMQARMRGFQARKRYLRRRAALGQ. In terms of domain architecture, MyTH4 1 spans 1551-1702; sequence RPGQPLAKPL…PTQLEWLAGW (152 aa). Disordered stretches follow at residues 1802-1833, 1963-2026, and 2040-2262; these read PGIQ…VQRS, MQQR…PKSF, and QITV…LPED. The span at 1808-1820 shows a compositional bias: pro residues; sequence SLPPGPPPGPAPT. The segment covering 1963–1980 has biased composition (low complexity); the sequence is MQQRQQQARASEAASQAS. Over residues 2059–2076 the composition is skewed to acidic residues; sequence AQEEEEEEEEEEEQEEQE. Residues 2102 to 2116 are compositionally biased toward basic and acidic residues; the sequence is APKEAEAEPAKETAA. The span at 2159–2170 shows a compositional bias: pro residues; it reads GPVPVPVQPSRP. Basic and acidic residues predominate over residues 2176 to 2185; sequence RKIDPKDEAL. Composition is skewed to pro residues over residues 2199-2217 and 2247-2261; these read MLSP…PRPK and HTPP…PLPE. Residues 2481–2542 enclose the SH3 domain; sequence KDSGYVIALR…PADIVQPAAA (62 aa). The segment at 2548 to 2567 is disordered; it reads SKEQRSGWHKGQLSNGEPGL. The MyTH4 2 domain maps to 2643 to 2789; it reads YTKAPIQESL…PPPGEMKAFL (147 aa). The 302-residue stretch at 2795-3096 folds into the FERM domain; the sequence is RLLLIHLPGG…ASCTEWPSIN (302 aa).

This sequence belongs to the TRAFAC class myosin-kinesin ATPase superfamily. Myosin family. In terms of tissue distribution, detected in brain, stomach and kidney.

It localises to the cytoplasm. The protein is Unconventional myosin-XVB of Homo sapiens (Human).